We begin with the raw amino-acid sequence, 435 residues long: Elongation factor 1-alpha (435 aa).

In terms of domain architecture, tr-type G spans 4–229 (KPHLNLIVIG…DQLEIPPKPV (226 aa)). Residues 13-20 (GHVDHGKS) form a G1 region. 13–20 (GHVDHGKS) is a GTP binding site. Residue Ser20 participates in Mg(2+) binding. The G2 stretch occupies residues 69 to 73 (GVTIN). A G3 region spans residues 90–93 (DAPG). GTP contacts are provided by residues 90-94 (DAPGH) and 152-155 (NKMD). The interval 152-155 (NKMD) is G4. The tract at residues 193-195 (VAP) is G5.

This sequence belongs to the TRAFAC class translation factor GTPase superfamily. Classic translation factor GTPase family. EF-Tu/EF-1A subfamily.

Its subcellular location is the cytoplasm. The catalysed reaction is GTP + H2O = GDP + phosphate + H(+). Its function is as follows. GTP hydrolase that promotes the GTP-dependent binding of aminoacyl-tRNA to the A-site of ribosomes during protein biosynthesis. In Sulfurisphaera tokodaii (strain DSM 16993 / JCM 10545 / NBRC 100140 / 7) (Sulfolobus tokodaii), this protein is Elongation factor 1-alpha.